The primary structure comprises 155 residues: 6,7-dimethyl-8-ribityllumazine synthase (155 aa).

Residues W23, 57–59 (AWE), and 81–83 (CVI) contribute to the 5-amino-6-(D-ribitylamino)uracil site. 86–87 (DT) serves as a coordination point for (2S)-2-hydroxy-3-oxobutyl phosphate. The active-site Proton donor is the H89. Position 114 (N114) interacts with 5-amino-6-(D-ribitylamino)uracil. R128 is a (2S)-2-hydroxy-3-oxobutyl phosphate binding site.

This sequence belongs to the DMRL synthase family. In terms of assembly, forms an icosahedral capsid composed of 60 subunits, arranged as a dodecamer of pentamers.

The enzyme catalyses (2S)-2-hydroxy-3-oxobutyl phosphate + 5-amino-6-(D-ribitylamino)uracil = 6,7-dimethyl-8-(1-D-ribityl)lumazine + phosphate + 2 H2O + H(+). The protein operates within cofactor biosynthesis; riboflavin biosynthesis; riboflavin from 2-hydroxy-3-oxobutyl phosphate and 5-amino-6-(D-ribitylamino)uracil: step 1/2. In terms of biological role, catalyzes the formation of 6,7-dimethyl-8-ribityllumazine by condensation of 5-amino-6-(D-ribitylamino)uracil with 3,4-dihydroxy-2-butanone 4-phosphate. This is the penultimate step in the biosynthesis of riboflavin. The chain is 6,7-dimethyl-8-ribityllumazine synthase from Stenotrophomonas maltophilia (strain K279a).